We begin with the raw amino-acid sequence, 189 residues long: Small ribosomal subunit protein uS5 (189 aa).

The 64-residue stretch at 22-85 (FVDKLVAINR…EAAKRELIFV (64 aa)) folds into the S5 DRBM domain.

This sequence belongs to the universal ribosomal protein uS5 family. Part of the 30S ribosomal subunit. Contacts proteins S4 and S8.

With S4 and S12 plays an important role in translational accuracy. Functionally, located at the back of the 30S subunit body where it stabilizes the conformation of the head with respect to the body. This is Small ribosomal subunit protein uS5 from Rhizobium johnstonii (strain DSM 114642 / LMG 32736 / 3841) (Rhizobium leguminosarum bv. viciae).